Here is a 92-residue protein sequence, read N- to C-terminus: Small ribosomal subunit protein uS19 (92 aa).

This sequence belongs to the universal ribosomal protein uS19 family.

Its function is as follows. Protein S19 forms a complex with S13 that binds strongly to the 16S ribosomal RNA. In Photorhabdus laumondii subsp. laumondii (strain DSM 15139 / CIP 105565 / TT01) (Photorhabdus luminescens subsp. laumondii), this protein is Small ribosomal subunit protein uS19.